We begin with the raw amino-acid sequence, 216 residues long: MELTPHEARVIGVLLEKEITTPEQYPLSLNSLTSGCNQKTSREPVLNLSESEVQNTLDALTKKRLISEQSGFGSRVVKYKHRFCNTEFSDLQLKSSELAVICLLLLRGPQTPGELRTRSNRLHDFHDVSEVEATLNELHRREAPLVMLLAKEPGKREARYRQLFSEVDANLVQALSSSLGAETASPQEKSALEARVCTLEQEVTELKAQLQSLLNN.

The protein belongs to the UPF0502 family.

The sequence is that of UPF0502 protein Spea_2482 from Shewanella pealeana (strain ATCC 700345 / ANG-SQ1).